The following is a 256-amino-acid chain: Zinc metalloprotease (256 aa).

The active-site Proton donor is His-74.

This sequence belongs to the peptidase M4 family. Requires Zn(2+) as cofactor.

Its subcellular location is the secreted. May play a role in ulcer formation. Proteolytic digestion of gastric mucus has been suggested as an important mechanism by which its pathogenicity is at least partly exerted. The polypeptide is Zinc metalloprotease (hap) (Helicobacter pylori (Campylobacter pylori)).